The chain runs to 350 residues: Uroporphyrinogen decarboxylase (350 aa).

Substrate-binding positions include 28-32 (RQAGR), Asp-78, Tyr-154, Thr-209, and His-325.

Belongs to the uroporphyrinogen decarboxylase family. In terms of assembly, homodimer.

Its subcellular location is the cytoplasm. It catalyses the reaction uroporphyrinogen III + 4 H(+) = coproporphyrinogen III + 4 CO2. The protein operates within porphyrin-containing compound metabolism; protoporphyrin-IX biosynthesis; coproporphyrinogen-III from 5-aminolevulinate: step 4/4. In terms of biological role, catalyzes the decarboxylation of four acetate groups of uroporphyrinogen-III to yield coproporphyrinogen-III. In Nitrobacter hamburgensis (strain DSM 10229 / NCIMB 13809 / X14), this protein is Uroporphyrinogen decarboxylase.